Here is a 259-residue protein sequence, read N- to C-terminus: Global transcriptional regulator CodY (259 aa).

The GAF domain stretch occupies residues 1–155 (MALLQKTRKI…GATVVGMEIL (155 aa)). A DNA-binding region (H-T-H motif) is located at residues 203 to 222 (ASKIADRVGITRSVIVNALR). At Ser215 the chain carries Phosphoserine.

Belongs to the CodY family.

Its subcellular location is the cytoplasm. Functionally, DNA-binding global transcriptional regulator which is involved in the adaptive response to starvation and acts by directly or indirectly controlling the expression of numerous genes in response to nutrient availability. During rapid exponential growth, CodY is highly active and represses genes whose products allow adaptation to nutrient depletion. The protein is Global transcriptional regulator CodY of Bacillus licheniformis (strain ATCC 14580 / DSM 13 / JCM 2505 / CCUG 7422 / NBRC 12200 / NCIMB 9375 / NCTC 10341 / NRRL NRS-1264 / Gibson 46).